Here is a 301-residue protein sequence, read N- to C-terminus: Phosducin-like protein (301 aa).

T2 carries the post-translational modification N-acetylthreonine. The tract at residues 15–60 is disordered; sequence YYYSTSEDEDSDHEDKDRGRGAPASSSTPAEAELAGEGISVNTGPK. 2 positions are modified to phosphoserine: S20 and S25. Residues 36–49 are compositionally biased toward low complexity; that stretch reads APASSSTPAEAELA. The 264-residue stretch at 36-299 folds into the Phosducin domain; the sequence is APASSSTPAE…TCHSEDSDLE (264 aa). Residues 158–301 are thioredoxin fold; sequence FKQVLEIPSG…HSEDSDLEID (144 aa). Phosphoserine is present on residues S226, S293, and S296.

The protein belongs to the phosducin family. Interacts with the CCT chaperonin complex. Forms a complex with the beta and gamma subunits of the GTP-binding protein, transducin.

The protein localises to the cell projection. Its subcellular location is the cilium. Its function is as follows. Functions as a co-chaperone for CCT in the assembly of heterotrimeric G protein complexes, facilitates the assembly of both Gbeta-Ggamma and RGS-Gbeta5 heterodimers. Also acts as a positive regulator of hedgehog signaling and regulates ciliary function. The chain is Phosducin-like protein (Pdcl) from Rattus norvegicus (Rat).